A 353-amino-acid chain; its full sequence is Phospho-N-acetylmuramoyl-pentapeptide-transferase (353 aa).

Helical transmembrane passes span 22-42, 65-85, 88-108, 129-149, 161-181, 192-212, 228-248, 256-276, 281-301, and 330-350; these read FAFF…ITWA, TPTM…LFCI, DNIF…IGLI, LLAQ…SSEL, PLFD…ISSS, GLAT…LYLS, GLGE…GFLW, VFMG…LAVI, ILLL…ILQV, and KIIV…LASI.

This sequence belongs to the glycosyltransferase 4 family. MraY subfamily. Mg(2+) is required as a cofactor.

Its subcellular location is the cell inner membrane. It catalyses the reaction UDP-N-acetyl-alpha-D-muramoyl-L-alanyl-gamma-D-glutamyl-meso-2,6-diaminopimeloyl-D-alanyl-D-alanine + di-trans,octa-cis-undecaprenyl phosphate = di-trans,octa-cis-undecaprenyl diphospho-N-acetyl-alpha-D-muramoyl-L-alanyl-D-glutamyl-meso-2,6-diaminopimeloyl-D-alanyl-D-alanine + UMP. It functions in the pathway cell wall biogenesis; peptidoglycan biosynthesis. Catalyzes the initial step of the lipid cycle reactions in the biosynthesis of the cell wall peptidoglycan: transfers peptidoglycan precursor phospho-MurNAc-pentapeptide from UDP-MurNAc-pentapeptide onto the lipid carrier undecaprenyl phosphate, yielding undecaprenyl-pyrophosphoryl-MurNAc-pentapeptide, known as lipid I. The chain is Phospho-N-acetylmuramoyl-pentapeptide-transferase from Campylobacter jejuni subsp. jejuni serotype O:2 (strain ATCC 700819 / NCTC 11168).